A 279-amino-acid chain; its full sequence is Stathmin domain-containing protein 1 (279 aa).

Disordered regions lie at residues 1–110 (MGCG…ERPK) and 178–254 (AAEE…VAQM). Gly2 is lipidated: N-myristoyl glycine. Residues 22–32 (KGWEEGSKADV) are compositionally biased toward basic and acidic residues. Over residues 34 to 45 (VTSSKENCSPQT) the composition is skewed to polar residues. An SLD domain is found at 121 to 248 (QGIIQSRSKV…GEPLKRKKSE (128 aa)). Basic and acidic residues-rich tracts occupy residues 178–191 (AAEERRKTKKEEIR) and 232–242 (EKSDVQEGEPL).

The protein is Stathmin domain-containing protein 1 (Stmnd1) of Mus musculus (Mouse).